Here is a 399-residue protein sequence, read N- to C-terminus: S-adenosylmethionine synthase (399 aa).

H17 serves as a coordination point for ATP. D19 contributes to the Mg(2+) binding site. E45 lines the K(+) pocket. E58 and Q101 together coordinate L-methionine. The tract at residues Q101–Q111 is flexible loop. ATP is bound by residues D177 to K179, R244 to F245, D253, R259 to K260, A276, and K280. D253 is an L-methionine binding site. Residue K284 participates in L-methionine binding.

Belongs to the AdoMet synthase family. Homotetramer; dimer of dimers. Mg(2+) serves as cofactor. It depends on K(+) as a cofactor.

The protein localises to the cytoplasm. It catalyses the reaction L-methionine + ATP + H2O = S-adenosyl-L-methionine + phosphate + diphosphate. The protein operates within amino-acid biosynthesis; S-adenosyl-L-methionine biosynthesis; S-adenosyl-L-methionine from L-methionine: step 1/1. Catalyzes the formation of S-adenosylmethionine (AdoMet) from methionine and ATP. The overall synthetic reaction is composed of two sequential steps, AdoMet formation and the subsequent tripolyphosphate hydrolysis which occurs prior to release of AdoMet from the enzyme. The sequence is that of S-adenosylmethionine synthase from Bacillus anthracis (strain A0248).